The chain runs to 310 residues: Tagatose-6-phosphate kinase (310 aa).

This sequence belongs to the carbohydrate kinase PfkB family. LacC subfamily.

It catalyses the reaction D-tagatofuranose 6-phosphate + ATP = D-tagatofuranose 1,6-bisphosphate + ADP + H(+). Its pathway is carbohydrate metabolism; D-tagatose 6-phosphate degradation; D-glyceraldehyde 3-phosphate and glycerone phosphate from D-tagatose 6-phosphate: step 1/2. The polypeptide is Tagatose-6-phosphate kinase (Streptococcus mutans serotype c (strain ATCC 700610 / UA159)).